A 162-amino-acid chain; its full sequence is Thy-1 membrane glycoprotein (162 aa).

The signal sequence occupies residues 1-19 (MNPAISVALLLSVLQVSRG). Gln20 bears the Pyrrolidone carboxylic acid mark. The Ig-like V-type domain occupies 20–127 (QKVTSLTACL…NKSISVYRDK (108 aa)). Cystine bridges form between Cys28–Cys131 and Cys38–Cys105. 3 N-linked (GlcNAc...) asparagine glycosylation sites follow: Asn42, Asn94, and Asn118. The GPI-anchor amidated cysteine; alternate moiety is linked to residue Cys131. A propeptide spans 132 to 162 (GGISLLVQNTSWMLLLLLSLSLLQALDFISL) (removed in mature form).

It is found in the cell membrane. Its function is as follows. May play a role in cell-cell or cell-ligand interactions during synaptogenesis and other events in the brain. The chain is Thy-1 membrane glycoprotein (Thy1) from Mus musculus (Mouse).